A 483-amino-acid polypeptide reads, in one-letter code: 23S rRNA (uracil(1939)-C(5))-methyltransferase RlmD (483 aa).

The span at 1–11 shows a compositional bias: basic residues; it reads MTGLGKRRPAR. The disordered stretch occupies residues 1–36; the sequence is MTGLGKRRPARSRSGVSGLRERRQPASVERSAGSEG. Residues 29-90 form the TRAM domain; it reads ERSAGSEGRR…KRFDEAHVSE (62 aa). [4Fe-4S] cluster contacts are provided by Cys103, Cys109, Cys112, and Cys189. Positions 298, 332, 337, 353, 379, and 401 each coordinate S-adenosyl-L-methionine. Cys427 functions as the Nucleophile in the catalytic mechanism.

The protein belongs to the class I-like SAM-binding methyltransferase superfamily. RNA M5U methyltransferase family. RlmD subfamily.

It carries out the reaction uridine(1939) in 23S rRNA + S-adenosyl-L-methionine = 5-methyluridine(1939) in 23S rRNA + S-adenosyl-L-homocysteine + H(+). Catalyzes the formation of 5-methyl-uridine at position 1939 (m5U1939) in 23S rRNA. In Halomonas elongata (strain ATCC 33173 / DSM 2581 / NBRC 15536 / NCIMB 2198 / 1H9), this protein is 23S rRNA (uracil(1939)-C(5))-methyltransferase RlmD.